The primary structure comprises 476 residues: Ribulose bisphosphate carboxylase large chain (476 aa).

The propeptide occupies 1-2; it reads MS. The residue at position 3 (proline 3) is an N-acetylproline. N6,N6,N6-trimethyllysine is present on lysine 14. Asparagine 123 and threonine 173 together coordinate substrate. Lysine 175 functions as the Proton acceptor in the catalytic mechanism. Position 177 (lysine 177) interacts with substrate. Mg(2+) contacts are provided by lysine 201, aspartate 203, and glutamate 204. Lysine 201 is modified (N6-carboxylysine). The Proton acceptor role is filled by histidine 294. Residues arginine 295, histidine 327, and serine 379 each coordinate substrate.

It belongs to the RuBisCO large chain family. Type I subfamily. As to quaternary structure, heterohexadecamer of 8 large chains and 8 small chains; disulfide-linked. The disulfide link is formed within the large subunit homodimers. Requires Mg(2+) as cofactor. In terms of processing, the disulfide bond which can form in the large chain dimeric partners within the hexadecamer appears to be associated with oxidative stress and protein turnover.

The protein localises to the plastid. Its subcellular location is the chloroplast. The enzyme catalyses 2 (2R)-3-phosphoglycerate + 2 H(+) = D-ribulose 1,5-bisphosphate + CO2 + H2O. It carries out the reaction D-ribulose 1,5-bisphosphate + O2 = 2-phosphoglycolate + (2R)-3-phosphoglycerate + 2 H(+). In terms of biological role, ruBisCO catalyzes two reactions: the carboxylation of D-ribulose 1,5-bisphosphate, the primary event in carbon dioxide fixation, as well as the oxidative fragmentation of the pentose substrate in the photorespiration process. Both reactions occur simultaneously and in competition at the same active site. The sequence is that of Ribulose bisphosphate carboxylase large chain from Arenaria drummondii (Drummond sandwort).